Consider the following 393-residue polypeptide: F-box protein KIB4 (393 aa).

The F-box domain occupies 12–59; that stretch reads AKQPILVLDLVRLVLERLSFVDFHRARCVSSVWYSASKSCIGGTNPTA.

It localises to the cytoplasm. It is found in the nucleus. The protein localises to the nucleolus. Its function is as follows. Component of SCF(ASK-cullin-F-box) E3 ubiquitin ligase complexes, which may mediate the ubiquitination and subsequent proteasomal degradation of target proteins. Required for brassinosteroid (BR) signal transduction. Mediates ASK7/BIN2/SK21 inactivation both by competing with substrate binding (e.g. BZR1) and by promoting its ubiquitination and subsequent proteasomal degradation. The polypeptide is F-box protein KIB4 (Arabidopsis thaliana (Mouse-ear cress)).